Here is a 459-residue protein sequence, read N- to C-terminus: Ribosomal protein uS12 methylthiotransferase RimO (459 aa).

Positions 11-126 (PKVGMVSLGC…VMQAVHSHLP (116 aa)) constitute an MTTase N-terminal domain. [4Fe-4S] cluster-binding residues include cysteine 20, cysteine 56, cysteine 85, cysteine 157, cysteine 161, and cysteine 164. In terms of domain architecture, Radical SAM core spans 143 to 388 (LTPRHYAYLK…MEVAEEVSAA (246 aa)). Residues 391-459 (ARKVGKTLKV…ADGHDLWGEV (69 aa)) form the TRAM domain.

It belongs to the methylthiotransferase family. RimO subfamily. [4Fe-4S] cluster serves as cofactor.

The protein resides in the cytoplasm. It catalyses the reaction L-aspartate(89)-[ribosomal protein uS12]-hydrogen + (sulfur carrier)-SH + AH2 + 2 S-adenosyl-L-methionine = 3-methylsulfanyl-L-aspartate(89)-[ribosomal protein uS12]-hydrogen + (sulfur carrier)-H + 5'-deoxyadenosine + L-methionine + A + S-adenosyl-L-homocysteine + 2 H(+). In terms of biological role, catalyzes the methylthiolation of an aspartic acid residue of ribosomal protein uS12. The protein is Ribosomal protein uS12 methylthiotransferase RimO of Burkholderia pseudomallei (strain K96243).